The sequence spans 269 residues: uncharacterized protein (269 aa).

The region spanning phenylalanine 14–arginine 89 is the ACT domain.

This is an uncharacterized protein from Bacillus subtilis (strain 168).